The following is a 364-amino-acid chain: Chorismate synthase (364 aa).

Residues Arg48 and Arg54 each coordinate NADP(+). Residues 125–127 (RSS), Gly282, 297–301 (KPPAS), and Arg323 each bind FMN.

Belongs to the chorismate synthase family. In terms of assembly, homotetramer. It depends on FMNH2 as a cofactor.

The enzyme catalyses 5-O-(1-carboxyvinyl)-3-phosphoshikimate = chorismate + phosphate. It functions in the pathway metabolic intermediate biosynthesis; chorismate biosynthesis; chorismate from D-erythrose 4-phosphate and phosphoenolpyruvate: step 7/7. Functionally, catalyzes the anti-1,4-elimination of the C-3 phosphate and the C-6 proR hydrogen from 5-enolpyruvylshikimate-3-phosphate (EPSP) to yield chorismate, which is the branch point compound that serves as the starting substrate for the three terminal pathways of aromatic amino acid biosynthesis. This reaction introduces a second double bond into the aromatic ring system. The sequence is that of Chorismate synthase from Chloroflexus aggregans (strain MD-66 / DSM 9485).